A 104-amino-acid chain; its full sequence is Large ribosomal subunit protein uL24 (104 aa).

It belongs to the universal ribosomal protein uL24 family. In terms of assembly, part of the 50S ribosomal subunit.

In terms of biological role, one of two assembly initiator proteins, it binds directly to the 5'-end of the 23S rRNA, where it nucleates assembly of the 50S subunit. One of the proteins that surrounds the polypeptide exit tunnel on the outside of the subunit. The protein is Large ribosomal subunit protein uL24 of Rhodopseudomonas palustris (strain BisB5).